The primary structure comprises 105 residues: MDIKKGDLVLVISGKDKGKRGKVISVLPSEEKVIVEGVNIVKKHTRPNAKMRQGGIIEKPAPLYRCKVMLICPHCNQPTRIKHTFLEDGRKVRVCSKCKEIIDRV.

The protein belongs to the universal ribosomal protein uL24 family. As to quaternary structure, part of the 50S ribosomal subunit.

Its function is as follows. One of two assembly initiator proteins, it binds directly to the 5'-end of the 23S rRNA, where it nucleates assembly of the 50S subunit. Functionally, one of the proteins that surrounds the polypeptide exit tunnel on the outside of the subunit. The protein is Large ribosomal subunit protein uL24 of Dictyoglomus thermophilum (strain ATCC 35947 / DSM 3960 / H-6-12).